Consider the following 164-residue polypeptide: Cyclic pyranopterin monophosphate synthase (164 aa).

Residues 75–77 (MCH) and 116–117 (ME) each bind substrate. Residue Asp-131 is part of the active site.

Belongs to the MoaC family. As to quaternary structure, homohexamer; trimer of dimers.

It carries out the reaction (8S)-3',8-cyclo-7,8-dihydroguanosine 5'-triphosphate = cyclic pyranopterin phosphate + diphosphate. It participates in cofactor biosynthesis; molybdopterin biosynthesis. Functionally, catalyzes the conversion of (8S)-3',8-cyclo-7,8-dihydroguanosine 5'-triphosphate to cyclic pyranopterin monophosphate (cPMP). This is Cyclic pyranopterin monophosphate synthase from Staphylococcus aureus (strain MSSA476).